Consider the following 306-residue polypeptide: Small ribosomal subunit protein uS2 (306 aa).

The disordered stretch occupies residues Glu257–Ala306. A compositionally biased stretch (basic and acidic residues) spans Glu275–Ala286. Positions Glu287–Asp300 are enriched in low complexity.

Belongs to the universal ribosomal protein uS2 family.

This Streptomyces griseus subsp. griseus (strain JCM 4626 / CBS 651.72 / NBRC 13350 / KCC S-0626 / ISP 5235) protein is Small ribosomal subunit protein uS2.